Reading from the N-terminus, the 266-residue chain is L-cystine-binding protein TcyJ (266 aa).

The signal sequence occupies residues 1–29 (MKLAHLGRQALMGVMAVALVAGMSVKSFA).

Belongs to the bacterial solute-binding protein 3 family. As to quaternary structure, the complex is composed of two ATP-binding proteins (TcyN), two transmembrane proteins (TcyL) and a solute-binding protein (TcyJ).

Its subcellular location is the periplasm. Part of the ABC transporter complex TcyJLN involved in L-cystine import. Binds cystine. The polypeptide is L-cystine-binding protein TcyJ (Escherichia coli O6:H1 (strain CFT073 / ATCC 700928 / UPEC)).